Consider the following 468-residue polypeptide: UDP-N-acetylmuramate--L-alanine ligase (468 aa).

112–118 (GTHGKTT) serves as a coordination point for ATP.

The protein belongs to the MurCDEF family.

The protein localises to the cytoplasm. The catalysed reaction is UDP-N-acetyl-alpha-D-muramate + L-alanine + ATP = UDP-N-acetyl-alpha-D-muramoyl-L-alanine + ADP + phosphate + H(+). It participates in cell wall biogenesis; peptidoglycan biosynthesis. Functionally, cell wall formation. The protein is UDP-N-acetylmuramate--L-alanine ligase of Neisseria meningitidis serogroup C (strain 053442).